A 179-amino-acid polypeptide reads, in one-letter code: PP2C-like domain-containing protein R307 (179 aa).

The PPM-type phosphatase domain maps to methionine 1–phenylalanine 176.

The protein localises to the virion. In Acanthamoeba polyphaga mimivirus (APMV), this protein is PP2C-like domain-containing protein R307.